We begin with the raw amino-acid sequence, 228 residues long: Translin (228 aa).

The tract at residues 86-90 (RFHEH) is DNA/RNA binding. Positions 177–198 (LDSGFRLLNLKNDSLRKRYDGL) are leucine-zipper. N6-acetyllysine is present on Lys187. Phosphoserine is present on Ser190. Lys199 is modified (N6-acetyllysine).

It belongs to the translin family. Ring-shaped heterooctamer of six TSN and two TSNAX subunits, DNA/RNA binding occurs inside the ring.

It localises to the cytoplasm. Its subcellular location is the nucleus. DNA-binding protein that specifically recognizes consensus sequences at the breakpoint junctions in chromosomal translocations, mostly involving immunoglobulin (Ig)/T-cell receptor gene segments. Seems to recognize single-stranded DNA ends generated by staggered breaks occurring at recombination hot spots. In terms of biological role, exhibits both single-stranded and double-stranded endoribonuclease activity. May act as an activator of RNA-induced silencing complex (RISC) by facilitating endonucleolytic cleavage of the siRNA passenger strand. The protein is Translin (TSN) of Pongo abelii (Sumatran orangutan).